A 363-amino-acid chain; its full sequence is S-adenosylmethionine:tRNA ribosyltransferase-isomerase (363 aa).

This sequence belongs to the QueA family. As to quaternary structure, monomer.

It localises to the cytoplasm. The enzyme catalyses 7-aminomethyl-7-carbaguanosine(34) in tRNA + S-adenosyl-L-methionine = epoxyqueuosine(34) in tRNA + adenine + L-methionine + 2 H(+). It functions in the pathway tRNA modification; tRNA-queuosine biosynthesis. Transfers and isomerizes the ribose moiety from AdoMet to the 7-aminomethyl group of 7-deazaguanine (preQ1-tRNA) to give epoxyqueuosine (oQ-tRNA). The protein is S-adenosylmethionine:tRNA ribosyltransferase-isomerase of Haemophilus influenzae (strain ATCC 51907 / DSM 11121 / KW20 / Rd).